The following is a 510-amino-acid chain: Lysine-specific demethylase 4D (510 aa).

The JmjN domain maps to 15–57 (IMIFRPTKEEFNDFDKYIAYMESQGAHRAGLAKVIPPKEWRAR). Glutamate 23 and glutamate 24 each carry polyADP-ribosyl glutamic acid. Tyrosine 133 provides a ligand contact to 2-oxoglutarate. Positions 143-309 (DGKTQQWNVG…YGKVASQCSC (167 aa)) constitute a JmjC domain. Positions 189 and 191 each coordinate Fe cation. 2 residues coordinate 2-oxoglutarate: asparagine 199 and lysine 207. Zn(2+)-binding residues include cysteine 235 and histidine 241. Position 242 (lysine 242) interacts with 2-oxoglutarate. Histidine 277 lines the Fe cation pocket. The Zn(2+) site is built by cysteine 307 and cysteine 309. The interval 397–510 (MCHTSRQAAD…ASEGGLTSDP (114 aa)) is disordered. The span at 461–471 (RLPEGRDDRSP) shows a compositional bias: basic and acidic residues.

Belongs to the JHDM3 histone demethylase family. Fe(2+) serves as cofactor. Ubiquitinated via 'Lys-63'-linked ubiquitin chains. Deubiquitinated by USP14 with the help of TRIM14 leading to stabilization.

The protein localises to the nucleus. The catalysed reaction is N(6),N(6),N(6)-trimethyl-L-lysyl(9)-[histone H3] + 2 2-oxoglutarate + 2 O2 = N(6)-methyl-L-lysyl(9)-[histone H3] + 2 formaldehyde + 2 succinate + 2 CO2. Functionally, histone demethylase that specifically demethylates 'Lys-9' of histone H3, thereby playing a central role in histone code. Does not demethylate histone H3 'Lys-4', H3 'Lys-27', H3 'Lys-36' nor H4 'Lys-20'. Demethylates both di- and trimethylated H3 'Lys-9' residue, while it has no activity on monomethylated residues. Demethylation of Lys residue generates formaldehyde and succinate. The sequence is that of Lysine-specific demethylase 4D (Kdm4d) from Rattus norvegicus (Rat).